Here is a 298-residue protein sequence, read N- to C-terminus: Lipoyl synthase 1 (298 aa).

[4Fe-4S] cluster contacts are provided by Cys34, Cys39, Cys45, Cys60, Cys64, Cys67, and Ser274. Residues 46–263 (FKAGTATFLI…RRAGEGMGFL (218 aa)) form the Radical SAM core domain. The interval 277 to 298 (AEQVQRLMRSHPRTPKNQHSPE) is disordered.

This sequence belongs to the radical SAM superfamily. Lipoyl synthase family. The cofactor is [4Fe-4S] cluster.

Its subcellular location is the cytoplasm. It catalyses the reaction [[Fe-S] cluster scaffold protein carrying a second [4Fe-4S](2+) cluster] + N(6)-octanoyl-L-lysyl-[protein] + 2 oxidized [2Fe-2S]-[ferredoxin] + 2 S-adenosyl-L-methionine + 4 H(+) = [[Fe-S] cluster scaffold protein] + N(6)-[(R)-dihydrolipoyl]-L-lysyl-[protein] + 4 Fe(3+) + 2 hydrogen sulfide + 2 5'-deoxyadenosine + 2 L-methionine + 2 reduced [2Fe-2S]-[ferredoxin]. It functions in the pathway protein modification; protein lipoylation via endogenous pathway; protein N(6)-(lipoyl)lysine from octanoyl-[acyl-carrier-protein]: step 2/2. Its function is as follows. Catalyzes the radical-mediated insertion of two sulfur atoms into the C-6 and C-8 positions of the octanoyl moiety bound to the lipoyl domains of lipoate-dependent enzymes, thereby converting the octanoylated domains into lipoylated derivatives. This is Lipoyl synthase 1 from Gloeobacter violaceus (strain ATCC 29082 / PCC 7421).